Here is a 401-residue protein sequence, read N- to C-terminus: ATP phosphoribosyltransferase regulatory subunit (401 aa).

Belongs to the class-II aminoacyl-tRNA synthetase family. HisZ subfamily. As to quaternary structure, heteromultimer composed of HisG and HisZ subunits.

Its subcellular location is the cytoplasm. The protein operates within amino-acid biosynthesis; L-histidine biosynthesis; L-histidine from 5-phospho-alpha-D-ribose 1-diphosphate: step 1/9. Its function is as follows. Required for the first step of histidine biosynthesis. May allow the feedback regulation of ATP phosphoribosyltransferase activity by histidine. This Desulforamulus reducens (strain ATCC BAA-1160 / DSM 100696 / MI-1) (Desulfotomaculum reducens) protein is ATP phosphoribosyltransferase regulatory subunit.